A 256-amino-acid polypeptide reads, in one-letter code: Indole-3-glycerol phosphate synthase (256 aa).

This sequence belongs to the TrpC family.

It carries out the reaction 1-(2-carboxyphenylamino)-1-deoxy-D-ribulose 5-phosphate + H(+) = (1S,2R)-1-C-(indol-3-yl)glycerol 3-phosphate + CO2 + H2O. Its pathway is amino-acid biosynthesis; L-tryptophan biosynthesis; L-tryptophan from chorismate: step 4/5. This is Indole-3-glycerol phosphate synthase from Chlorobaculum tepidum (strain ATCC 49652 / DSM 12025 / NBRC 103806 / TLS) (Chlorobium tepidum).